Consider the following 276-residue polypeptide: uncharacterized protein (276 aa).

Residues 1–25 (MNKKRLLPKASLGALFMLFGTALTA) form the signal peptide. Residue C26 is the site of N-palmitoyl cysteine attachment. A lipid anchor (S-diacylglycerol cysteine) is attached at C26.

The protein belongs to the MG439/MG440 family.

The protein resides in the cell membrane. This is an uncharacterized protein from Mycoplasma pneumoniae (strain ATCC 29342 / M129 / Subtype 1) (Mycoplasmoides pneumoniae).